The primary structure comprises 64 residues: Large ribosomal subunit protein bL33c (64 aa).

It belongs to the bacterial ribosomal protein bL33 family.

Its subcellular location is the plastid. It is found in the chloroplast. This chain is Large ribosomal subunit protein bL33c, found in Thalassiosira pseudonana (Marine diatom).